We begin with the raw amino-acid sequence, 408 residues long: uncharacterized protein (408 aa).

Disordered regions lie at residues 218 to 265 (EPTA…TSER) and 367 to 408 (MESE…ETPN). Over residues 369-379 (SEVINSSSSTS) the composition is skewed to low complexity. The segment covering 394-408 (IVEEVPETAENETPN) has biased composition (acidic residues).

This sequence to C.elegans C05E11.1.

This is an uncharacterized protein from Arabidopsis thaliana (Mouse-ear cress).